The following is a 530-amino-acid chain: MFS transporter PfmaC (530 aa).

The segment at 41-76 (TTAVSDGDNQSSTMSGKTAAGDATSPASGSGSGGWF) is disordered. A compositionally biased stretch (polar residues) spans 42 to 56 (TAVSDGDNQSSTMSG). Residues 59–69 (AAGDATSPASG) show a composition bias toward low complexity. Helical transmembrane passes span 165 to 182 (YWLP…LGMY), 195 to 215 (FFIG…LGCW), 226 to 246 (ALFV…QAAL), 261 to 281 (WLFI…LFCF), 324 to 344 (IFTS…SLTV), 369 to 389 (NIPT…GFVS), 396 to 416 (GPVC…FTAW), 422 to 442 (LLMA…LLAG), 456 to 476 (AFIL…FQQL), and 493 to 513 (PSAL…IPLL).

This sequence belongs to the major facilitator superfamily. Allantoate permease family.

The protein localises to the cell membrane. In terms of biological role, MFS transporter; part of the gene cluster that mediates the biosynthesis of dihydroxynaphthalene (DHN)-melanin, a bluish-green pigment forming a dark layer in the conidial wall that protects the conidia from UV radiations. This is MFS transporter PfmaC from Pestalotiopsis fici (strain W106-1 / CGMCC3.15140).